We begin with the raw amino-acid sequence, 256 residues long: Imidazole glycerol phosphate synthase subunit HisF (256 aa).

Active-site residues include Asp12 and Asp131.

Belongs to the HisA/HisF family. As to quaternary structure, heterodimer of HisH and HisF.

The protein resides in the cytoplasm. It carries out the reaction 5-[(5-phospho-1-deoxy-D-ribulos-1-ylimino)methylamino]-1-(5-phospho-beta-D-ribosyl)imidazole-4-carboxamide + L-glutamine = D-erythro-1-(imidazol-4-yl)glycerol 3-phosphate + 5-amino-1-(5-phospho-beta-D-ribosyl)imidazole-4-carboxamide + L-glutamate + H(+). Its pathway is amino-acid biosynthesis; L-histidine biosynthesis; L-histidine from 5-phospho-alpha-D-ribose 1-diphosphate: step 5/9. IGPS catalyzes the conversion of PRFAR and glutamine to IGP, AICAR and glutamate. The HisF subunit catalyzes the cyclization activity that produces IGP and AICAR from PRFAR using the ammonia provided by the HisH subunit. The sequence is that of Imidazole glycerol phosphate synthase subunit HisF from Micrococcus luteus (strain ATCC 4698 / DSM 20030 / JCM 1464 / CCM 169 / CCUG 5858 / IAM 1056 / NBRC 3333 / NCIMB 9278 / NCTC 2665 / VKM Ac-2230) (Micrococcus lysodeikticus).